Reading from the N-terminus, the 195-residue chain is Neurensin-1 (195 aa).

A run of 2 helical transmembrane segments spans residues 66 to 86 (LISGTVFVILGLTVLAVGFLV) and 120 to 140 (AVLFCIGGTSMAGCLLMSVFV).

It belongs to the VMP family. Expressed in brain. Not detectable in other tissues tested.

The protein localises to the membrane. It localises to the cell projection. The protein resides in the neuron projection. Its function is as follows. May play an important role in neural organelle transport, and in transduction of nerve signals or in nerve growth. May play a role in neurite extension. May play a role in memory consolidation. This is Neurensin-1 from Homo sapiens (Human).